Consider the following 289-residue polypeptide: NAD kinase (289 aa).

The active-site Proton acceptor is the Asp-68. NAD(+) is bound by residues 68 to 69, Lys-73, 142 to 143, Arg-153, Asp-172, 183 to 188, and Gln-243; these read DG, ND, and TAYSLS.

This sequence belongs to the NAD kinase family. Requires a divalent metal cation as cofactor.

Its subcellular location is the cytoplasm. The enzyme catalyses NAD(+) + ATP = ADP + NADP(+) + H(+). Its function is as follows. Involved in the regulation of the intracellular balance of NAD and NADP, and is a key enzyme in the biosynthesis of NADP. Catalyzes specifically the phosphorylation on 2'-hydroxyl of the adenosine moiety of NAD to yield NADP. The polypeptide is NAD kinase (Acetivibrio thermocellus (strain ATCC 27405 / DSM 1237 / JCM 9322 / NBRC 103400 / NCIMB 10682 / NRRL B-4536 / VPI 7372) (Clostridium thermocellum)).